A 155-amino-acid chain; its full sequence is Putative pre-16S rRNA nuclease (155 aa).

Belongs to the YqgF nuclease family.

The protein resides in the cytoplasm. Its function is as follows. Could be a nuclease involved in processing of the 5'-end of pre-16S rRNA. This Xanthomonas campestris pv. campestris (strain 8004) protein is Putative pre-16S rRNA nuclease.